The primary structure comprises 347 residues: NADH-ubiquinone oxidoreductase chain 2 (347 aa).

Transmembrane regions (helical) follow at residues 3–23 (PIIL…TMIS), 25–45 (HWLL…PILM), 59–79 (YFLT…INTA), 96–116 (LVTM…FWVP), 127–147 (GMLL…QIFP), 150–170 (NPNI…WGGL), 193–213 (ILMY…MLTI), 240–260 (ITLT…LTGF), 274–294 (SNIM…YFYM), and 323–343 (IFLL…SPAL).

Belongs to the complex I subunit 2 family. Core subunit of respiratory chain NADH dehydrogenase (Complex I) which is composed of 45 different subunits. Interacts with TMEM242.

It is found in the mitochondrion inner membrane. The catalysed reaction is a ubiquinone + NADH + 5 H(+)(in) = a ubiquinol + NAD(+) + 4 H(+)(out). Its function is as follows. Core subunit of the mitochondrial membrane respiratory chain NADH dehydrogenase (Complex I) which catalyzes electron transfer from NADH through the respiratory chain, using ubiquinone as an electron acceptor. Essential for the catalytic activity and assembly of complex I. The protein is NADH-ubiquinone oxidoreductase chain 2 of Lemur catta (Ring-tailed lemur).